We begin with the raw amino-acid sequence, 345 residues long: DNA-directed RNA polymerase subunit alpha (345 aa).

Residues 1–234 (MRKNEMSTSK…DLLTTFLYVR (234 aa)) form an alpha N-terminal domain (alpha-NTD) region. The alpha C-terminal domain (alpha-CTD) stretch occupies residues 266–345 (LEERVLENRF…DKKIVLNRRK (80 aa)).

This sequence belongs to the RNA polymerase alpha chain family. In terms of assembly, in plastids the minimal PEP RNA polymerase catalytic core is composed of four subunits: alpha, beta, beta', and beta''. When a (nuclear-encoded) sigma factor is associated with the core the holoenzyme is formed, which can initiate transcription.

Its subcellular location is the plastid. The protein resides in the chloroplast. It catalyses the reaction RNA(n) + a ribonucleoside 5'-triphosphate = RNA(n+1) + diphosphate. Functionally, DNA-dependent RNA polymerase catalyzes the transcription of DNA into RNA using the four ribonucleoside triphosphates as substrates. The protein is DNA-directed RNA polymerase subunit alpha of Adiantum capillus-veneris (Maidenhair fern).